The primary structure comprises 339 residues: Small ribosomal subunit biogenesis GTPase RsgA (339 aa).

The CP-type G domain occupies 111–271; sequence MRGLLKPVAA…LIDSPGIREF (161 aa). Residues 159–162 and 213–221 contribute to the GTP site; these read NKAD and GQSGVGKSS. Residues cysteine 295, cysteine 300, histidine 302, and cysteine 308 each coordinate Zn(2+).

It belongs to the TRAFAC class YlqF/YawG GTPase family. RsgA subfamily. Monomer. Associates with 30S ribosomal subunit, binds 16S rRNA. Zn(2+) serves as cofactor.

Its subcellular location is the cytoplasm. In terms of biological role, one of several proteins that assist in the late maturation steps of the functional core of the 30S ribosomal subunit. Helps release RbfA from mature subunits. May play a role in the assembly of ribosomal proteins into the subunit. Circularly permuted GTPase that catalyzes slow GTP hydrolysis, GTPase activity is stimulated by the 30S ribosomal subunit. The sequence is that of Small ribosomal subunit biogenesis GTPase RsgA from Pseudomonas aeruginosa (strain ATCC 15692 / DSM 22644 / CIP 104116 / JCM 14847 / LMG 12228 / 1C / PRS 101 / PAO1).